A 1136-amino-acid polypeptide reads, in one-letter code: Type I inositol polyphosphate 5-phosphatase 13 (1136 aa).

WD repeat units lie at residues 147–185, 205–244, 259–297, 436–475, and 515–552; these read ETQT…EAGC, VTTS…VSHD, AHRG…KSLL, EDTR…RDVN, and SHNE…PLDN. Catalytic regions lie at residues 782–798 and 861–876; these read DMVA…FGIT and KKRI…YRDT. Lys-940 participates in a covalent cross-link: Glycyl lysine isopeptide (Lys-Gly) (interchain with G-Cter in ubiquitin). Residues 1104–1136 are disordered; sequence KNLGGSRRYPTDITRNGSTRPRTEDSVRRGKSR. Residues 1124 to 1136 show a composition bias toward basic and acidic residues; the sequence is PRTEDSVRRGKSR.

It belongs to the inositol polyphosphate 5-phosphatase family. As to quaternary structure, interacts with KIN10, but not with PHOT1. Mg(2+) serves as cofactor. As to expression, expressed in young seedlings and flowers. Highly expressed in anther and pollen grains, but not in pistils. Not detected in maturated roots, stems and rosette leaves.

Its subcellular location is the nucleus. The enzyme catalyses 1D-myo-inositol 1,4,5-trisphosphate + H2O = 1D-myo-inositol 1,4-bisphosphate + phosphate. Its function is as follows. Converts inositol 1,4,5-trisphosphate (Ins(1,4,5)P3) to inositol 1,4-bisphosphate. Modulates cotyledon vein development through regulating auxin homeostasis. Involved in blue light responses. Decreases the amount of KIN10 degraded by the proteasome under low nutrient conditions. Participates with IP5P12 in the control of Ins(1,4,5)P3/Ca(2+) levels that is crucial for maintaining pollen dormancy and regulating early germination of pollen. May modulate auxin transport by regulating vesicle trafficking and thereby plays a role in root gravitropism. The chain is Type I inositol polyphosphate 5-phosphatase 13 from Arabidopsis thaliana (Mouse-ear cress).